A 101-amino-acid chain; its full sequence is Large ribosomal subunit protein uL24 (101 aa).

The protein belongs to the universal ribosomal protein uL24 family. In terms of assembly, part of the 50S ribosomal subunit.

One of two assembly initiator proteins, it binds directly to the 5'-end of the 23S rRNA, where it nucleates assembly of the 50S subunit. In terms of biological role, one of the proteins that surrounds the polypeptide exit tunnel on the outside of the subunit. In Streptococcus mutans serotype c (strain ATCC 700610 / UA159), this protein is Large ribosomal subunit protein uL24.